Consider the following 368-residue polypeptide: Cystathionine beta-lyase (368 aa).

An N6-(pyridoxal phosphate)lysine modification is found at Lys221.

The protein belongs to the class-II pyridoxal-phosphate-dependent aminotransferase family. MalY/PatB cystathionine beta-lyase subfamily. Requires pyridoxal 5'-phosphate as cofactor.

The enzyme catalyses L,L-cystathionine + H2O = L-homocysteine + pyruvate + NH4(+). The catalysed reaction is an S-substituted L-cysteine + H2O = a thiol + pyruvate + NH4(+). It participates in amino-acid biosynthesis; L-methionine biosynthesis via de novo pathway; L-homocysteine from L-cystathionine: step 1/1. Functionally, catalyzes the transformation of cystathionine to homocysteine. The chain is Cystathionine beta-lyase (metC) from Corynebacterium glutamicum (Brevibacterium saccharolyticum).